The sequence spans 737 residues: Ribosome-releasing factor 2, mitochondrial (737 aa).

The transit peptide at 1–29 (MLKYALHSGGMPRNRLLRQLSAYIFRRSY) directs the protein to the mitochondrion. Residues 31–310 (SNIRNIGILA…AVNTYLPAPE (280 aa)) enclose the tr-type G domain. Residues 40 to 47 (AHIDAGKT), 104 to 108 (DTPGH), and 158 to 161 (NKMD) each bind GTP.

Belongs to the TRAFAC class translation factor GTPase superfamily. Classic translation factor GTPase family. EF-G/EF-2 subfamily.

The protein resides in the mitochondrion. In terms of biological role, mitochondrial GTPase that mediates the disassembly of ribosomes from messenger RNA at the termination of mitochondrial protein biosynthesis. Not involved in the GTP-dependent ribosomal translocation step during translation elongation. In Drosophila persimilis (Fruit fly), this protein is Ribosome-releasing factor 2, mitochondrial.